The primary structure comprises 559 residues: Suppressor of tumorigenicity 7 protein-like (559 aa).

A run of 3 helical transmembrane segments spans residues 39–59 (GLAN…LYAL), 83–103 (FYVA…IFEW), and 513–533 (LPFF…LAFL).

Belongs to the ST7 family. Ubiquitously expressed.

It is found in the membrane. In Mus musculus (Mouse), this protein is Suppressor of tumorigenicity 7 protein-like (St7l).